The primary structure comprises 831 residues: MTEDFPKILPLLVEEDTFLYPFMIAPIFLQNNASIKAVAYAKNNKSLVFIACQKDKLNDNEAPYYDVGVIGSVMREANMPNGRVKLLFNGIAKGRILEPAKENEQGFLEAQISPIEYLEYDKENIQAIVEVLKEKVITLANVSSLFPPDLIKALEDNDDPNRIADLIAAALHLKKDQAYFLFANNNTEQRLLDLIDIVIEETKTQKLQKEIKSKVHQKMEQTNKEYFLKEQLKQIQKELGTDKQRDEDLNQYYQKLESIKPFLKEEAFKEIKKQIDRLSRTHADSSDSATLQNYVETMLDVPFGQYEKKALDIKHVKEQLDNDHYSLKRPKERIVEYFATMQLLEMRHKKKPEKKDKTKGTILCFYGPPGVGKTSLANSIAKAIERPLVRIALGGLEDVNELRGHRRTYIGSMPGRIVQGLIEAKKMNPVMVLDEIDKVDRSVRGDPASALLEILDPEQNIAFRDHYANFSIDLSQVIFIATANNIDRIPAPLRDRMEFISVSSYTPSEKEEIAKNYLIPQELEKHALKPSEVDISHECLKLIIEKYTREAGVRDLRRQIATIMRKAALKYLEDNPHKKGRTKKSEDKDKKGGNEENEKRGESKDFCVSITPDNLKEYLERMVFEIDPIDEENKIGIVNGLAWTPVGGDVLKIEAVKIRGKGELKLTGSLGDVMKESAIIAFSVVKVLLDNETLKVPKIPSETDAENKKKKKVLKVYNAYDLHLHVPEGATPKDGPSAGIAMASVMASILCDRAIRSEVAMTGELTLSGEVLPIGGLKEKLIAAFKAGIKTALIPVKNYERDLDEIPTEVRENLNIVAVKNIAEVLEKTLL.

The 194-residue stretch at 9 to 202 folds into the Lon N-terminal domain; sequence LPLLVEEDTF…DLIDIVIEET (194 aa). Residue 367–374 coordinates ATP; sequence GPPGVGKT. A disordered region spans residues 574-605; the sequence is DNPHKKGRTKKSEDKDKKGGNEENEKRGESKD. The 200-residue stretch at 632 to 831 folds into the Lon proteolytic domain; the sequence is ENKIGIVNGL…IAEVLEKTLL (200 aa). Residues Ser-737 and Lys-780 contribute to the active site.

Belongs to the peptidase S16 family. In terms of assembly, homohexamer. Organized in a ring with a central cavity.

The protein localises to the cytoplasm. The enzyme catalyses Hydrolysis of proteins in presence of ATP.. Its function is as follows. ATP-dependent serine protease that mediates the selective degradation of mutant and abnormal proteins as well as certain short-lived regulatory proteins. Required for cellular homeostasis and for survival from DNA damage and developmental changes induced by stress. Degrades polypeptides processively to yield small peptide fragments that are 5 to 10 amino acids long. Binds to DNA in a double-stranded, site-specific manner. This chain is Lon protease, found in Helicobacter pylori (strain J99 / ATCC 700824) (Campylobacter pylori J99).